Here is a 271-residue protein sequence, read N- to C-terminus: Tryptophan synthase alpha chain (271 aa).

Active-site proton acceptor residues include E49 and D60.

Belongs to the TrpA family. In terms of assembly, tetramer of two alpha and two beta chains.

The catalysed reaction is (1S,2R)-1-C-(indol-3-yl)glycerol 3-phosphate + L-serine = D-glyceraldehyde 3-phosphate + L-tryptophan + H2O. The protein operates within amino-acid biosynthesis; L-tryptophan biosynthesis; L-tryptophan from chorismate: step 5/5. Functionally, the alpha subunit is responsible for the aldol cleavage of indoleglycerol phosphate to indole and glyceraldehyde 3-phosphate. The protein is Tryptophan synthase alpha chain of Nitrosococcus oceani (strain ATCC 19707 / BCRC 17464 / JCM 30415 / NCIMB 11848 / C-107).